The following is a 456-amino-acid chain: Bifunctional protein GlmU (456 aa).

Residues 1–229 (MYKSAVILAA…PDEIKGVNSR (229 aa)) form a pyrophosphorylase region. Residues 8 to 11 (LAAG), Lys-22, Gln-73, and 78 to 79 (GT) contribute to the UDP-N-acetyl-alpha-D-glucosamine site. Asp-103 is a Mg(2+) binding site. Residues Gly-140, Glu-155, Asn-170, and Asn-227 each contribute to the UDP-N-acetyl-alpha-D-glucosamine site. Asn-227 contributes to the Mg(2+) binding site. The linker stretch occupies residues 230–250 (GQLAEAEEILRLRINERHMEN). Residues 251–456 (GVTLIDPKNT…GWVAKKGLKK (206 aa)) form an N-acetyltransferase region. Arg-332 and Lys-350 together coordinate UDP-N-acetyl-alpha-D-glucosamine. Catalysis depends on His-362, which acts as the Proton acceptor. UDP-N-acetyl-alpha-D-glucosamine-binding residues include Tyr-365 and Asn-376. Residues 385–386 (NY), Ala-422, and Arg-439 contribute to the acetyl-CoA site.

It in the N-terminal section; belongs to the N-acetylglucosamine-1-phosphate uridyltransferase family. In the C-terminal section; belongs to the transferase hexapeptide repeat family. Homotrimer. It depends on Mg(2+) as a cofactor.

It is found in the cytoplasm. The enzyme catalyses alpha-D-glucosamine 1-phosphate + acetyl-CoA = N-acetyl-alpha-D-glucosamine 1-phosphate + CoA + H(+). It carries out the reaction N-acetyl-alpha-D-glucosamine 1-phosphate + UTP + H(+) = UDP-N-acetyl-alpha-D-glucosamine + diphosphate. The protein operates within nucleotide-sugar biosynthesis; UDP-N-acetyl-alpha-D-glucosamine biosynthesis; N-acetyl-alpha-D-glucosamine 1-phosphate from alpha-D-glucosamine 6-phosphate (route II): step 2/2. It participates in nucleotide-sugar biosynthesis; UDP-N-acetyl-alpha-D-glucosamine biosynthesis; UDP-N-acetyl-alpha-D-glucosamine from N-acetyl-alpha-D-glucosamine 1-phosphate: step 1/1. Its pathway is bacterial outer membrane biogenesis; LPS lipid A biosynthesis. In terms of biological role, catalyzes the last two sequential reactions in the de novo biosynthetic pathway for UDP-N-acetylglucosamine (UDP-GlcNAc). The C-terminal domain catalyzes the transfer of acetyl group from acetyl coenzyme A to glucosamine-1-phosphate (GlcN-1-P) to produce N-acetylglucosamine-1-phosphate (GlcNAc-1-P), which is converted into UDP-GlcNAc by the transfer of uridine 5-monophosphate (from uridine 5-triphosphate), a reaction catalyzed by the N-terminal domain. The sequence is that of Bifunctional protein GlmU from Clostridium novyi (strain NT).